The chain runs to 147 residues: Large ribosomal subunit protein uL13 (147 aa).

Belongs to the universal ribosomal protein uL13 family. In terms of assembly, part of the 50S ribosomal subunit.

This protein is one of the early assembly proteins of the 50S ribosomal subunit, although it is not seen to bind rRNA by itself. It is important during the early stages of 50S assembly. This Pediococcus pentosaceus (strain ATCC 25745 / CCUG 21536 / LMG 10740 / 183-1w) protein is Large ribosomal subunit protein uL13.